Here is a 160-residue protein sequence, read N- to C-terminus: Glutathione peroxidase homolog BsaA (160 aa).

The active site involves Cys35.

This sequence belongs to the glutathione peroxidase family.

This Bacillus subtilis (strain 168) protein is Glutathione peroxidase homolog BsaA (bsaA).